We begin with the raw amino-acid sequence, 154 residues long: Large ribosomal subunit protein uL22c (154 aa).

This sequence belongs to the universal ribosomal protein uL22 family. Part of the 50S ribosomal subunit.

It is found in the plastid. The protein resides in the chloroplast. This protein binds specifically to 23S rRNA. Functionally, the globular domain of the protein is located near the polypeptide exit tunnel on the outside of the subunit, while an extended beta-hairpin is found that lines the wall of the exit tunnel in the center of the 70S ribosome. This Platanus occidentalis (Sycamore) protein is Large ribosomal subunit protein uL22c (rpl22).